Here is a 359-residue protein sequence, read N- to C-terminus: DNA ligase (359 aa).

Residues 32 to 35 (EIKY), arginine 39, 55 to 57 (RVS), and glutamate 93 contribute to the ATP site. The N6-AMP-lysine intermediate role is filled by lysine 34. An a divalent metal cation-binding site is contributed by glutamate 217. Lysine 232 and lysine 238 together coordinate ATP.

It belongs to the ATP-dependent DNA ligase family. A divalent metal cation is required as a cofactor.

The catalysed reaction is ATP + (deoxyribonucleotide)n-3'-hydroxyl + 5'-phospho-(deoxyribonucleotide)m = (deoxyribonucleotide)n+m + AMP + diphosphate.. Its function is as follows. DNA ligase that seals nicks in double-stranded DNA during DNA replication, DNA recombination and DNA repair in an ATP-dependent reaction. Binds specifically to DNA nicks containing a 3'-OH and a 5'-phosphate group. The protein is DNA ligase of Escherichia phage T7 (Bacteriophage T7).